A 57-amino-acid chain; its full sequence is Large ribosomal subunit protein bL32 (57 aa).

The span at 1–19 (MATPKFKKSRANTHSRRSQ) shows a compositional bias: basic residues. Residues 1-20 (MATPKFKKSRANTHSRRSQW) form a disordered region.

This sequence belongs to the bacterial ribosomal protein bL32 family.

The polypeptide is Large ribosomal subunit protein bL32 (Corynebacterium aurimucosum (strain ATCC 700975 / DSM 44827 / CIP 107346 / CN-1) (Corynebacterium nigricans)).